The following is a 145-amino-acid chain: Putative phosphatidylglycerol/phosphatidylinositol transfer protein DDB_G0282179 (145 aa).

Positions 1–20 (MIKTILLLLINFMLILIVNG) are cleaved as a signal peptide. A glycan (N-linked (GlcNAc...) asparagine) is linked at Asn-134.

It belongs to the NPC2 family. Monomer.

Functionally, catalyzes the intermembrane transfer of phosphatidylglycerol and phosphatidylinositol. The sequence is that of Putative phosphatidylglycerol/phosphatidylinositol transfer protein DDB_G0282179 from Dictyostelium discoideum (Social amoeba).